Here is a 714-residue protein sequence, read N- to C-terminus: Mitochondrial division protein 1 (714 aa).

A coiled-coil region spans residues 240–298 (LNIQKNSTLSEIRDIEVEVENLRQKKEKLLGKIANIEQNQLLLEDNLKQIDDRLDFLEE). The interval 323-354 (LKNDAIRNEGVTTESISSEASNLPPRRRQQLR) is disordered. The segment covering 332-343 (GVTTESISSEAS) has biased composition (polar residues). S376 carries the phosphoserine modification. WD repeat units lie at residues 396–436 (THDD…KIGE), 439–478 (GHLATINCMQINRDYGTLVTGGRDAALKLWNLNLAQQLYQ), 500–539 (AHTDEVTALSLDPSFLVSGSQDRTIRQWDLRSGKCLQTID), 561–603 (TQRN…RTLK), 604–642 (GHTDAITSLKFDSACLVTGSYDRTVRIWDLRTGLLNKFH), 644–681 (YSAPVLSLDLFQENAAVVVADEPSVQIYDSEKDESWSC), and 685–714 (GNETSVSTVKYKENYMVEGRENGDVNIWAV).

The protein belongs to the WD repeat MDV1/CAF4 family. As to quaternary structure, interacts with CAF4, DNM1 and FIS1, components of the mitochondrial fission machinery. Interacts via its N-terminal, coiled-coil extension (NTE) with FIS1, and via its WD repeats with DNM1.

Its subcellular location is the mitochondrion outer membrane. Its function is as follows. Involved in mitochondrial fission. Has a partially redundant function to CAF4 in acting as an adapter protein, binding to FIS1 on the mitochondrial outer membrane and recruiting the dynamin-like GTPase DNM1 to form mitochondrial fission complexes. Formation of these complexes is required to promote constriction and fission of the mitochondrial compartment at a late step in mitochondrial division. The polypeptide is Mitochondrial division protein 1 (MDV1) (Saccharomyces cerevisiae (strain ATCC 204508 / S288c) (Baker's yeast)).